The following is a 142-amino-acid chain: Large ribosomal subunit protein uL11 (142 aa).

It belongs to the universal ribosomal protein uL11 family. As to quaternary structure, part of the ribosomal stalk of the 50S ribosomal subunit. Interacts with L10 and the large rRNA to form the base of the stalk. L10 forms an elongated spine to which L12 dimers bind in a sequential fashion forming a multimeric L10(L12)X complex. Post-translationally, one or more lysine residues are methylated.

Forms part of the ribosomal stalk which helps the ribosome interact with GTP-bound translation factors. The polypeptide is Large ribosomal subunit protein uL11 (Brucella anthropi (strain ATCC 49188 / DSM 6882 / CCUG 24695 / JCM 21032 / LMG 3331 / NBRC 15819 / NCTC 12168 / Alc 37) (Ochrobactrum anthropi)).